We begin with the raw amino-acid sequence, 55 residues long: Large ribosomal subunit protein bL33 (55 aa).

Belongs to the bacterial ribosomal protein bL33 family.

This is Large ribosomal subunit protein bL33 from Caulobacter vibrioides (strain ATCC 19089 / CIP 103742 / CB 15) (Caulobacter crescentus).